Reading from the N-terminus, the 188-residue chain is FMN-dependent NADPH-azoreductase (188 aa).

This sequence belongs to the azoreductase type 2 family. Homotetramer. It depends on FMN as a cofactor.

In terms of biological role, catalyzes the reductive cleavage of azo bond in aromatic azo compounds to the corresponding amines. Requires NADPH, but not NADH, as an electron donor for its activity. The sequence is that of FMN-dependent NADPH-azoreductase (azo1) from Staphylococcus epidermidis (strain ATCC 12228 / FDA PCI 1200).